A 524-amino-acid chain; its full sequence is Lysine--tRNA ligase (524 aa).

Positions 39–47 (ASGIPHMGS) match the 'HIGH' region motif. Residues 294–298 (KISKS) carry the 'KMSKS' region motif. Lys297 serves as a coordination point for ATP.

This sequence belongs to the class-I aminoacyl-tRNA synthetase family.

Its subcellular location is the cytoplasm. The catalysed reaction is tRNA(Lys) + L-lysine + ATP = L-lysyl-tRNA(Lys) + AMP + diphosphate. In Cenarchaeum symbiosum, this protein is Lysine--tRNA ligase (lysS).